A 372-amino-acid chain; its full sequence is MKIGIPREIKNNENRVGLSPSGVHALVESGHTVLVETNAGSGSFFEDVDYKEAGAEIVAEQAKVWDVDMVIKVKEPLESEYPYFKEGLVLFTYLHLANEEKLTQALIDRKVISIAYETVQLPDRSSPLLSPMSEVAGRMSAQVGAEFLQKLNGGMGILLGGVPGVPKGKVTIIGGGQAGTNAAKIALGLGADVTILDVNPKRLQQLDDLFGGRVHTIMSNPLNIELYVKQSDLVIGAVLIPGAKAPRLVTEDMIKQMKNGSVIIDIAIDQGGIFETTDKITTHDDPTYIKHGVVHYAVANMPGAVPRTSTLALNNATLPYALMLANKGYREAFKSNQPLSLGLNTYKGHVTNKGVAEAFEMEYKSVEEALQL.

His-95 is an active-site residue. 169 to 199 (KVTIIGGGQAGTNAAKIALGLGADVTILDVN) contacts NAD(+).

It belongs to the AlaDH/PNT family.

The catalysed reaction is L-alanine + NAD(+) + H2O = pyruvate + NH4(+) + NADH + H(+). Its pathway is amino-acid degradation; L-alanine degradation via dehydrogenase pathway; NH(3) and pyruvate from L-alanine: step 1/1. Its function is as follows. May play a role in cell wall synthesis as L-alanine is an important constituent of the peptidoglycan layer. This chain is Alanine dehydrogenase 2 (ald2), found in Staphylococcus aureus (strain N315).